A 358-amino-acid polypeptide reads, in one-letter code: Holliday junction branch migration complex subunit RuvB (358 aa).

Residues 1–24 (MAIKRSHNSPPATEENLLTPNPTI) form a disordered region. Over residues 8 to 22 (NSPPATEENLLTPNP) the composition is skewed to polar residues. Residues 13–195 (TEENLLTPNP…FGLIQRLRFY (183 aa)) form a large ATPase domain (RuvB-L) region. Residues Ile-34, Arg-35, Gly-76, Lys-79, Thr-80, Thr-81, 142–144 (EDY), Arg-185, Tyr-195, and Arg-232 contribute to the ATP site. Thr-80 serves as a coordination point for Mg(2+). Residues 196–266 (AVEELTAIIL…LAAEGLNQLN (71 aa)) form a small ATPAse domain (RuvB-S) region. Residues 269–358 (SMGLDWTDRL…KDRSLPLFEF (90 aa)) are head domain (RuvB-H). Positions 324 and 329 each coordinate DNA.

This sequence belongs to the RuvB family. As to quaternary structure, homohexamer. Forms an RuvA(8)-RuvB(12)-Holliday junction (HJ) complex. HJ DNA is sandwiched between 2 RuvA tetramers; dsDNA enters through RuvA and exits via RuvB. An RuvB hexamer assembles on each DNA strand where it exits the tetramer. Each RuvB hexamer is contacted by two RuvA subunits (via domain III) on 2 adjacent RuvB subunits; this complex drives branch migration. In the full resolvosome a probable DNA-RuvA(4)-RuvB(12)-RuvC(2) complex forms which resolves the HJ.

The protein localises to the cytoplasm. The enzyme catalyses ATP + H2O = ADP + phosphate + H(+). The RuvA-RuvB-RuvC complex processes Holliday junction (HJ) DNA during genetic recombination and DNA repair, while the RuvA-RuvB complex plays an important role in the rescue of blocked DNA replication forks via replication fork reversal (RFR). RuvA specifically binds to HJ cruciform DNA, conferring on it an open structure. The RuvB hexamer acts as an ATP-dependent pump, pulling dsDNA into and through the RuvAB complex. RuvB forms 2 homohexamers on either side of HJ DNA bound by 1 or 2 RuvA tetramers; 4 subunits per hexamer contact DNA at a time. Coordinated motions by a converter formed by DNA-disengaged RuvB subunits stimulates ATP hydrolysis and nucleotide exchange. Immobilization of the converter enables RuvB to convert the ATP-contained energy into a lever motion, pulling 2 nucleotides of DNA out of the RuvA tetramer per ATP hydrolyzed, thus driving DNA branch migration. The RuvB motors rotate together with the DNA substrate, which together with the progressing nucleotide cycle form the mechanistic basis for DNA recombination by continuous HJ branch migration. Branch migration allows RuvC to scan DNA until it finds its consensus sequence, where it cleaves and resolves cruciform DNA. This Microcystis aeruginosa (strain NIES-843 / IAM M-2473) protein is Holliday junction branch migration complex subunit RuvB.